The primary structure comprises 518 residues: MARAKRVKRDSVTHIYQTCKQAGTCPPDVLNKVEQTTVADNILKYGSGGVFFGGLGIGTGRGTGGVTGYRPLPEGPGIRVGGTPTVVRPSLVPESVGPADILPIDTIDPVEPTASSVVPLTESSATDLLPGEVETIAEINPVSEGPTIDSPVVTTSRGSSAILEVAPDPIPPTRVRVARTQYHNPAFQIITESTPAQGETSLADHILVTSGSGGQTIGSDITDIIELQEIPSRYSFEIEEPTPPRQSSTPLQRTQTTGRRRGVSLTNRRLVQQVQVDNPLFIDKPSKLVRFSFDNPVFEEDITNIFEQDLETFEEPPDRDFLDIKKLSRPQYSTTPAGYVRVSRLGTRGTIRTRSGAQIGSQVHFYRDLSSIDSEDPIELQLLGQHSGDATIVQGTVESTFVDMDIAEDPLSESIEAHSDDLLLDEAVEDFSGSQLVIGNRRSTTSYTVPRFETTRSSSYYVQDTQGYYVAYPEHRNTAEIIYPTPDIPVVVIHTHDNSGDFYLHPSLRRRKRKRKYL.

The short motif at 1 to 10 (MARAKRVKRD) is the Nuclear localization signal element. A disulfide bridge connects residues cysteine 19 and cysteine 25. Positions 238 to 262 (IEEPTPPRQSSTPLQRTQTTGRRRG) are disordered. Positions 510-517 (RRKRKRKY) match the Nuclear localization signal motif.

Belongs to the papillomaviridae L2 protein family. In terms of assembly, interacts with major capsid protein L1. Interacts with E2; this interaction inhibits E2 transcriptional activity but not the DNA replication function E2. Interacts with host GADD45GIP1. Interacts with host HSPA8; this interaction is required for L2 nuclear translocation. Interacts with host importins KPNB2 and KPNB3. Forms a complex with importin alpha2-beta1 heterodimers via interaction with the importin alpha2 adapter. Interacts with host DYNLT1; this interaction is essential for virus intracellular transport during entry. Interacts (via C-terminus) with host retromer subunits VPS35 and VPS29. Post-translationally, highly phosphorylated.

The protein localises to the virion. It localises to the host nucleus. The protein resides in the host early endosome. It is found in the host Golgi apparatus. Functionally, minor protein of the capsid that localizes along the inner surface of the virion, within the central cavities beneath the L1 pentamers. Plays a role in capsid stabilization through interaction with the major capsid protein L1. Once the virion enters the host cell, L2 escorts the genomic DNA into the nucleus by promoting escape from the endosomal compartments and traffic through the host Golgi network. Mechanistically, the C-terminus of L2 possesses a cell-penetrating peptide that protudes from the host endosome, interacts with host cytoplasmic retromer cargo and thereby mediates the capsid delivery to the host trans-Golgi network. Plays a role through its interaction with host dynein in the intracellular microtubule-dependent transport of viral capsid toward the nucleus. Mediates the viral genome import into the nucleus through binding to host importins. Once within the nucleus, L2 localizes viral genomes to host PML bodies in order to activate early gene expression for establishment of infection. Later on, promotes late gene expression by interacting with the viral E2 protein and by inhibiting its transcriptional activation functions. During virion assembly, encapsidates the genome by direct interaction with the viral DNA. This is Minor capsid protein L2 from Homo sapiens (Human).